The primary structure comprises 118 residues: Large ribosomal subunit protein bL20 (118 aa).

Belongs to the bacterial ribosomal protein bL20 family.

Binds directly to 23S ribosomal RNA and is necessary for the in vitro assembly process of the 50S ribosomal subunit. It is not involved in the protein synthesizing functions of that subunit. The polypeptide is Large ribosomal subunit protein bL20 (Staphylococcus saprophyticus subsp. saprophyticus (strain ATCC 15305 / DSM 20229 / NCIMB 8711 / NCTC 7292 / S-41)).